Here is an 821-residue protein sequence, read N- to C-terminus: TORTIFOLIA1-like protein 1 (821 aa).

HEAT repeat units follow at residues 69-110 (PDSP…SYTD), 114-151 (SQLA…QFLK), 163-201 (SSLV…SATE), 205-242 (AAFQ…VGAI), and 245-282 (QSLE…HSSS). Ser406 is subject to Phosphoserine. 2 disordered regions span residues 416-437 (PSRQ…NTSV) and 553-610 (MSIQ…RAWD). The stretch at 501 to 554 (PPLQRQLLHLERQQTHIMNMLQDFMGGSHDGMISLENRVRGLERIVEEMSREMS) forms a coiled coil. Over residues 579 to 590 (YGPSSRNTQTST) the composition is skewed to polar residues.

As to expression, expressed at low levels in roots, hypocotyls, stems, flowers, siliques, cotyledons, and leaves. Particularly present in hydathodes of cotyledons and root hairs.

Its subcellular location is the cytoplasm. The protein resides in the cytoskeleton. Plant-specific microtubule-associated protein (MAP) that regulates the orientation of cortical microtubules and the direction of organ growth. The polypeptide is TORTIFOLIA1-like protein 1 (Arabidopsis thaliana (Mouse-ear cress)).